Here is a 194-residue protein sequence, read N- to C-terminus: Peptidyl-tRNA hydrolase (194 aa).

Tyr-17 lines the tRNA pocket. The Proton acceptor role is filled by His-22. The tRNA site is built by Tyr-68, Asn-70, and Asn-116.

This sequence belongs to the PTH family. As to quaternary structure, monomer.

It is found in the cytoplasm. The enzyme catalyses an N-acyl-L-alpha-aminoacyl-tRNA + H2O = an N-acyl-L-amino acid + a tRNA + H(+). Hydrolyzes ribosome-free peptidyl-tRNAs (with 1 or more amino acids incorporated), which drop off the ribosome during protein synthesis, or as a result of ribosome stalling. In terms of biological role, catalyzes the release of premature peptidyl moieties from peptidyl-tRNA molecules trapped in stalled 50S ribosomal subunits, and thus maintains levels of free tRNAs and 50S ribosomes. The chain is Peptidyl-tRNA hydrolase from Pseudomonas fluorescens (strain ATCC BAA-477 / NRRL B-23932 / Pf-5).